The following is a 405-amino-acid chain: Deoxyguanosinetriphosphate triphosphohydrolase-like protein (405 aa).

The HD domain occupies 75–219; the sequence is RLTHTIEVAQ…AAIADDIAYN (145 aa).

It belongs to the dGTPase family. Type 2 subfamily.

This chain is Deoxyguanosinetriphosphate triphosphohydrolase-like protein, found in Sinorhizobium medicae (strain WSM419) (Ensifer medicae).